The chain runs to 268 residues: Aliphatic sulfonates import ATP-binding protein SsuB 2 (268 aa).

Residues 16–230 (VQLRNVVRQF…DSGQAGFQSI (215 aa)) enclose the ABC transporter domain. An ATP-binding site is contributed by 48–55 (GASGSGKT).

This sequence belongs to the ABC transporter superfamily. Aliphatic sulfonates importer (TC 3.A.1.17.2) family. In terms of assembly, the complex is composed of two ATP-binding proteins (SsuB), two transmembrane proteins (SsuC) and a solute-binding protein (SsuA).

It is found in the cell inner membrane. The catalysed reaction is ATP + H2O + aliphatic sulfonate-[sulfonate-binding protein]Side 1 = ADP + phosphate + aliphatic sulfonateSide 2 + [sulfonate-binding protein]Side 1.. Its function is as follows. Part of the ABC transporter complex SsuABC involved in aliphatic sulfonates import. Responsible for energy coupling to the transport system. The protein is Aliphatic sulfonates import ATP-binding protein SsuB 2 of Pseudomonas savastanoi pv. phaseolicola (strain 1448A / Race 6) (Pseudomonas syringae pv. phaseolicola (strain 1448A / Race 6)).